A 360-amino-acid polypeptide reads, in one-letter code: Arginase, non-hepatic 2 (360 aa).

Mn(2+) is bound by residues H122, D145, H147, and D149. Substrate-binding positions include 147–151, 158–160, and D204; these read HADIN and SGN. Mn(2+) contacts are provided by D253 and D255. Substrate is bound by residues T267 and E298.

The protein belongs to the arginase family. In terms of assembly, homotrimer. Mn(2+) is required as a cofactor. In terms of tissue distribution, expressed at differing tadpole stages in tail, intestine, hindlimb and trunk region. Strongest in tadpole tail.

It catalyses the reaction L-arginine + H2O = urea + L-ornithine. The protein operates within nitrogen metabolism; urea cycle; L-ornithine and urea from L-arginine: step 1/1. In terms of biological role, as well as its role in the urea cycle, may be involved in tissue remodeling. This chain is Arginase, non-hepatic 2 (arg2-b), found in Xenopus laevis (African clawed frog).